A 349-amino-acid chain; its full sequence is ATPase GET3 (349 aa).

27 to 34 (KGGVGKTT) serves as a coordination point for ATP. The active site involves aspartate 58. ATP contacts are provided by glutamate 240 and asparagine 267. The Zn(2+) site is built by cysteine 280 and cysteine 283.

Belongs to the arsA ATPase family. As to quaternary structure, homodimer. Component of the Golgi to ER traffic (GET) complex, which is composed of GET1, GET2 and GET3. Within the complex, GET1 and GET2 form a heterotetramer which is stabilized by phosphatidylinositol binding and which binds to the GET3 homodimer. Interacts with the chloride channel protein GEF1.

It is found in the cytoplasm. Its subcellular location is the endoplasmic reticulum. It localises to the golgi apparatus. In terms of biological role, ATPase required for the post-translational delivery of tail-anchored (TA) proteins to the endoplasmic reticulum. Recognizes and selectively binds the transmembrane domain of TA proteins in the cytosol. This complex then targets to the endoplasmic reticulum by membrane-bound receptors GET1 and GET2, where the tail-anchored protein is released for insertion. This process is regulated by ATP binding and hydrolysis. ATP binding drives the homodimer towards the closed dimer state, facilitating recognition of newly synthesized TA membrane proteins. ATP hydrolysis is required for insertion. Subsequently, the homodimer reverts towards the open dimer state, lowering its affinity for the GET1-GET2 receptor, and returning it to the cytosol to initiate a new round of targeting. Cooperates with the HDEL receptor ERD2 to mediate the ATP-dependent retrieval of resident ER proteins that contain a C-terminal H-D-E-L retention signal from the Golgi to the ER. Involved in low-level resistance to the oxyanions arsenite and arsenate, and in heat tolerance. The protein is ATPase GET3 of Eremothecium gossypii (strain ATCC 10895 / CBS 109.51 / FGSC 9923 / NRRL Y-1056) (Yeast).